A 219-amino-acid polypeptide reads, in one-letter code: UPF0073 inner membrane protein YqfA (219 aa).

The Cytoplasmic segment spans residues 1–23 (MVQKPLIKQGYSLAEEIANSVSH). Residues 24-44 (GIGLVFGIVGLVLLLVQAVDL) form a helical membrane-spanning segment. Residues 45 to 53 (NASATAITS) lie on the Periplasmic side of the membrane. Residues 54–74 (YSLYGGSMILLFLASTLYHAI) form a helical membrane-spanning segment. Over 75-90 (PHQRAKMWLKKFDHCA) the chain is Cytoplasmic. Residues 91 to 111 (IYLLIAGTYTPFLLVGLDSPL) traverse the membrane as a helical segment. The Periplasmic portion of the chain corresponds to 112 to 113 (AR). Residues 114–134 (GLMIVIWSLALLGILFKLTIA) traverse the membrane as a helical segment. The Cytoplasmic segment spans residues 135-138 (HRFK). The chain crosses the membrane as a helical span at residues 139 to 159 (ILSLVTYLAMGWLSLVVIYEM). At 160 to 165 (AVKLAA) the chain is on the periplasmic side. A helical membrane pass occupies residues 166 to 186 (GSVTLLAVGGVVYSLGVIFYV). Residues 187–195 (CKRIPYNHA) lie on the Cytoplasmic side of the membrane. Residues 196–216 (IWHGFVLGGSVCHFLAIYLYI) form a helical membrane-spanning segment. The Periplasmic portion of the chain corresponds to 217–219 (GQA).

It belongs to the UPF0073 (Hly-III) family.

Its subcellular location is the cell inner membrane. This is UPF0073 inner membrane protein YqfA (yqfA) from Escherichia coli O157:H7.